The primary structure comprises 553 residues: Solute carrier family 22 member 4 (553 aa).

The Cytoplasmic portion of the chain corresponds to Met-1 to Leu-20. Residues Ile-21–Phe-41 traverse the membrane as a helical segment. Residues Leu-42 to Thr-142 lie on the Extracellular side of the membrane. 3 N-linked (GlcNAc...) asparagine glycosylation sites follow: Asn-57, Asn-64, and Asn-91. The chain crosses the membrane as a helical span at residues Pro-143 to Leu-163. Residues Ser-164 to Lys-171 are Cytoplasmic-facing. The chain crosses the membrane as a helical span at residues Val-172–Asn-192. Residues Trp-193–Thr-197 are Extracellular-facing. A helical transmembrane segment spans residues Val-198–Gly-218. Gly-218–Ser-225 is a binding site for ATP. At Thr-219–Thr-232 the chain is on the cytoplasmic side. The chain crosses the membrane as a helical span at residues Leu-233 to Ile-253. Topologically, residues Arg-254 to Arg-257 are extracellular. Residues Met-258–Pro-278 form a helical membrane-spanning segment. At Glu-279–Asn-339 the chain is on the cytoplasmic side. Residues Ile-340 to Ala-360 form a helical membrane-spanning segment. At Leu-361–Tyr-373 the chain is on the extracellular side. A helical membrane pass occupies residues Leu-374 to Leu-394. Residues Arg-395–Arg-400 lie on the Cytoplasmic side of the membrane. The helical transmembrane segment at Tyr-401–Pro-421 threads the bilayer. Residues Glu-422–Ser-428 lie on the Extracellular side of the membrane. Residues Ile-429–Phe-449 traverse the membrane as a helical segment. At Thr-450–Ala-462 the chain is on the cytoplasmic side. The chain crosses the membrane as a helical span at residues Val-463–Leu-483. The Extracellular segment spans residues Gly-484 to Arg-488. The chain crosses the membrane as a helical span at residues Leu-489–Phe-509. The Cytoplasmic segment spans residues Pro-510–Phe-553.

This sequence belongs to the major facilitator (TC 2.A.1) superfamily. Organic cation transporter (TC 2.A.1.19) family. As to quaternary structure, interacts with PDZK1. Expressed in kidney. Expressed in small intestines. Expressed in liver in non-parenchymal liver tissue such as sinusoidal vessels. Weakly expressed in lung and brain. Expressed in testis and spleen. Expressed in heart.

It is found in the apical cell membrane. The protein localises to the mitochondrion membrane. Its subcellular location is the basal cell membrane. It catalyses the reaction ergothioneine(out) + Na(+)(out) = ergothioneine(in) + Na(+)(in). The enzyme catalyses acetylcholine(in) = acetylcholine(out). The catalysed reaction is (R)-carnitine(out) + Na(+)(out) = (R)-carnitine(in) + Na(+)(in). It carries out the reaction glycine betaine(out) + Na(+)(out) = glycine betaine(in) + Na(+)(in). Its activity is regulated as follows. Allosterically activated by intracellular ATP. Its function is as follows. Transporter that mediates the transport of endogenous and microbial zwitterions and organic cations. Functions as a Na(+)-dependent and pH-dependent high affinity microbial symporter of potent food-derived antioxidant ergothioeine. Transports one sodium ion with one ergothioeine molecule. Involved in the absorption of ergothioneine from the luminal/apical side of the small intestine and renal tubular cells, and into non-parenchymal liver cells, thereby contributing to maintain steady-state ergothioneine level in the body. Also mediates the bidirectional transport of acetycholine, although the exact transport mechanism has not been fully identified yet. Most likely exports anti-inflammatory acetylcholine in non-neuronal tissues, thereby contributing to the non-neuronal cholinergic system. Displays a general physiological role linked to better survival by controlling inflammation and oxidative stress, which may be related to ergothioneine and acetycholine transports. May also function as a low-affinity Na(+)-dependent transporter of L-carnitine through the mitochondrial membrane, thereby maintaining intracellular carnitine homeostasis. May contribute to regulate the transport of cationic compounds in testis across the blood-testis-barrier. This is Solute carrier family 22 member 4 from Mus musculus (Mouse).